The sequence spans 476 residues: Serine/threonine-protein kinase sax-1 (476 aa).

Positions 87 to 381 constitute a Protein kinase domain; it reads FESLKVIGRG…LDEIKQCPFV (295 aa). Residues 93–101 and lysine 116 each bind ATP; that span reads IGRGAFGEV. Aspartate 210 functions as the Proton acceptor in the catalytic mechanism. An AGC-kinase C-terminal domain is found at 382-452; sequence KRIDWNHIRE…KRFDGLTQKM (71 aa).

It belongs to the protein kinase superfamily. AGC Ser/Thr protein kinase family. Mg(2+) is required as a cofactor. Widely expressed in embryonic and larval neurons that contribute axons to the nerve ring and in hypodermal cells, including lateral seam cells. Also displays a punctate localization in muscle.

It localises to the cytoplasm. Its subcellular location is the nucleus. It catalyses the reaction L-seryl-[protein] + ATP = O-phospho-L-seryl-[protein] + ADP + H(+). It carries out the reaction L-threonyl-[protein] + ATP = O-phospho-L-threonyl-[protein] + ADP + H(+). Acts with sax-2 to restrict the growth of both primary and secondary neurites. Regulates mechanosensory tiling by controlling the termination point of sensory dendrites. The sequence is that of Serine/threonine-protein kinase sax-1 from Caenorhabditis elegans.